The sequence spans 130 residues: Holo-[acyl-carrier-protein] synthase (130 aa).

Residues aspartate 9 and glutamate 58 each coordinate Mg(2+).

It belongs to the P-Pant transferase superfamily. AcpS family. It depends on Mg(2+) as a cofactor.

Its subcellular location is the cytoplasm. The enzyme catalyses apo-[ACP] + CoA = holo-[ACP] + adenosine 3',5'-bisphosphate + H(+). In terms of biological role, transfers the 4'-phosphopantetheine moiety from coenzyme A to a Ser of acyl-carrier-protein. This is Holo-[acyl-carrier-protein] synthase from Mycobacterium sp. (strain JLS).